The chain runs to 305 residues: tRNA dimethylallyltransferase (305 aa).

14 to 21 serves as a coordination point for ATP; sequence GPTASGKT. 16 to 21 provides a ligand contact to substrate; sequence TASGKT. Interaction with substrate tRNA regions lie at residues 39–42, 163–167, and 243–248; these read DSAL, QRIIR, and RCVGYR.

The protein belongs to the IPP transferase family. In terms of assembly, monomer. It depends on Mg(2+) as a cofactor.

The catalysed reaction is adenosine(37) in tRNA + dimethylallyl diphosphate = N(6)-dimethylallyladenosine(37) in tRNA + diphosphate. In terms of biological role, catalyzes the transfer of a dimethylallyl group onto the adenine at position 37 in tRNAs that read codons beginning with uridine, leading to the formation of N6-(dimethylallyl)adenosine (i(6)A). This Vesicomyosocius okutanii subsp. Calyptogena okutanii (strain HA) protein is tRNA dimethylallyltransferase.